The chain runs to 309 residues: Homoserine kinase (309 aa).

91-101 (PIGSGLGSSAC) is a binding site for ATP.

The protein belongs to the GHMP kinase family. Homoserine kinase subfamily.

Its subcellular location is the cytoplasm. The enzyme catalyses L-homoserine + ATP = O-phospho-L-homoserine + ADP + H(+). Its pathway is amino-acid biosynthesis; L-threonine biosynthesis; L-threonine from L-aspartate: step 4/5. In terms of biological role, catalyzes the ATP-dependent phosphorylation of L-homoserine to L-homoserine phosphate. The protein is Homoserine kinase of Yersinia pseudotuberculosis serotype O:1b (strain IP 31758).